Here is a 542-residue protein sequence, read N- to C-terminus: Chaperonin GroEL (542 aa).

ATP-binding positions include 29–32 (TLGP), 86–90 (DGTTT), Gly-413, 478–480 (DAL), and Asp-494.

Belongs to the chaperonin (HSP60) family. Forms a cylinder of 14 subunits composed of two heptameric rings stacked back-to-back. Interacts with the co-chaperonin GroES.

Its subcellular location is the cytoplasm. It carries out the reaction ATP + H2O + a folded polypeptide = ADP + phosphate + an unfolded polypeptide.. Functionally, together with its co-chaperonin GroES, plays an essential role in assisting protein folding. The GroEL-GroES system forms a nano-cage that allows encapsulation of the non-native substrate proteins and provides a physical environment optimized to promote and accelerate protein folding. This is Chaperonin GroEL from Clostridioides difficile (strain 630) (Peptoclostridium difficile).